A 262-amino-acid polypeptide reads, in one-letter code: ATP synthase subunit a (262 aa).

Helical transmembrane passes span 24 to 44 (AVHLDTLFFSLVAGVLFLVVF), 85 to 105 (IAPLALTIFCWVFIMNAIDLV), 129 to 149 (DISATLGMSICVFGLILFYTV), 194 to 214 (LFGNMYAGELIFILIAVMYMA), and 228 to 248 (LVWAIFHILVITLQAFIFMML).

Belongs to the ATPase A chain family. In terms of assembly, F-type ATPases have 2 components, CF(1) - the catalytic core - and CF(0) - the membrane proton channel. CF(1) has five subunits: alpha(3), beta(3), gamma(1), delta(1), epsilon(1). CF(0) has three main subunits: a(1), b(2) and c(9-12). The alpha and beta chains form an alternating ring which encloses part of the gamma chain. CF(1) is attached to CF(0) by a central stalk formed by the gamma and epsilon chains, while a peripheral stalk is formed by the delta and b chains.

The protein resides in the cell inner membrane. Its function is as follows. Key component of the proton channel; it plays a direct role in the translocation of protons across the membrane. The protein is ATP synthase subunit a of Haemophilus ducreyi (strain 35000HP / ATCC 700724).